A 387-amino-acid polypeptide reads, in one-letter code: Probable tRNA sulfurtransferase (387 aa).

In terms of domain architecture, THUMP spans 67-167 (SLLKNLFTRL…KEHFLIISES (101 aa)). ATP contacts are provided by residues 185–186 (LL), 210–211 (TF), R269, G287, and Q296.

This sequence belongs to the ThiI family.

The protein localises to the cytoplasm. It catalyses the reaction [ThiI sulfur-carrier protein]-S-sulfanyl-L-cysteine + a uridine in tRNA + 2 reduced [2Fe-2S]-[ferredoxin] + ATP + H(+) = [ThiI sulfur-carrier protein]-L-cysteine + a 4-thiouridine in tRNA + 2 oxidized [2Fe-2S]-[ferredoxin] + AMP + diphosphate. The catalysed reaction is [ThiS sulfur-carrier protein]-C-terminal Gly-Gly-AMP + S-sulfanyl-L-cysteinyl-[cysteine desulfurase] + AH2 = [ThiS sulfur-carrier protein]-C-terminal-Gly-aminoethanethioate + L-cysteinyl-[cysteine desulfurase] + A + AMP + 2 H(+). Its pathway is cofactor biosynthesis; thiamine diphosphate biosynthesis. Functionally, catalyzes the ATP-dependent transfer of a sulfur to tRNA to produce 4-thiouridine in position 8 of tRNAs, which functions as a near-UV photosensor. Also catalyzes the transfer of sulfur to the sulfur carrier protein ThiS, forming ThiS-thiocarboxylate. This is a step in the synthesis of thiazole, in the thiamine biosynthesis pathway. The sulfur is donated as persulfide by IscS. In Mycoplasma pneumoniae (strain ATCC 29342 / M129 / Subtype 1) (Mycoplasmoides pneumoniae), this protein is Probable tRNA sulfurtransferase.